The sequence spans 1024 residues: Protein sumv-1 (1024 aa).

Disordered regions lie at residues 447–486, 501–564, 577–617, 645–664, 710–739, and 773–1024; these read DASQ…KKMP, NFQG…RRGV, PSRH…RSQA, SQMA…GSPQ, VRSG…DTVQ, and AGNS…EEEL. Composition is skewed to polar residues over residues 467–486, 501–514, and 528–542; these read SFGT…KKMP, NFQG…SSAT, and RSQQ…QTQD. Positions 584 to 600 are enriched in low complexity; sequence SPLTPSTSTSSSQLLAP. Residues 605 to 617 are compositionally biased toward polar residues; that stretch reads QPGTSSQTFRSQA. 2 stretches are compositionally biased toward low complexity: residues 710 to 730 and 784 to 809; these read VRSG…ASGS and AGAP…ASTS. Over residues 810–832 the composition is skewed to polar residues; sequence VPEPTKSSESSVDPQSDVSFSNP. Positions 859-870 are enriched in low complexity; sequence TLASESTSSEAT. Positions 873–883 are enriched in polar residues; sequence HDTTSSSSAET. Positions 903-914 are enriched in basic and acidic residues; that stretch reads PEKEKEKIDRPK. 3 stretches are compositionally biased toward low complexity: residues 916 to 943, 952 to 962, and 970 to 986; these read PKSS…NQAI, SASTSSSAAST, and LLAE…QQQA. A compositionally biased stretch (polar residues) spans 987 to 998; sequence IGSTSKNGGSTK.

The protein resides in the nucleus. The protein localises to the cytoplasm. Its subcellular location is the cell projection. It localises to the axon. Functionally, nuclear factor that influences the activity of genes involved in vulval development. The chain is Protein sumv-1 from Caenorhabditis elegans.